The primary structure comprises 325 residues: Protease HtpX homolog (325 aa).

The chain crosses the membrane as a helical span at residues 20-40 (IGYLLGGGGGMMIALVIAVAM). His130 provides a ligand contact to Zn(2+). Glu131 is an active-site residue. Zn(2+) is bound at residue His134. Transmembrane regions (helical) follow at residues 145-165 (IVAT…FLGG) and 173-193 (VMGV…AMIV). Position 202 (Glu202) interacts with Zn(2+). The interval 286-325 (SAAMTARAAAPSQNSGPWGQRSDNAGGNSNGGSRYRGPWS) is disordered. The segment covering 306–325 (RSDNAGGNSNGGSRYRGPWS) has biased composition (low complexity).

The protein belongs to the peptidase M48B family. Zn(2+) is required as a cofactor.

It localises to the cell inner membrane. The polypeptide is Protease HtpX homolog (Brucella melitensis biotype 2 (strain ATCC 23457)).